Reading from the N-terminus, the 359-residue chain is Prostaglandin D2 receptor (359 aa).

At 1–21 (MKSPFYRCQNTTSVEKGNSAV) the chain is on the extracellular side. An N-linked (GlcNAc...) asparagine glycan is attached at asparagine 10. Residues 22-42 (MGGVLFSTGLLGNLLALGLLA) form a helical membrane-spanning segment. At 43-59 (RSGLGWCSRRPLRPLPS) the chain is on the cytoplasmic side. Residues 60–80 (VFYMLVCGLTVTDLLGKCLLS) form a helical membrane-spanning segment. At 81 to 107 (PVVLAAYAQNRSLRVLAPALDNSLCQA) the chain is on the extracellular side. N-linked (GlcNAc...) asparagine glycosylation is present at asparagine 90. Cysteines 105 and 183 form a disulfide. Residues 108 to 128 (FAFFMSFFGLSSTLQLLAMAL) traverse the membrane as a helical segment. At 129 to 150 (ECWLSLGHPFFYRRHITLRLGA) the chain is on the cytoplasmic side. Residues 151–171 (LVAPVVSAFSLAFCALPFMGF) traverse the membrane as a helical segment. Over 172–195 (GKFVQYCPGTWCFIQMVHEEGSLS) the chain is Extracellular. Residues 196–216 (VLGYSVLYSSLMALLVLATVL) traverse the membrane as a helical segment. At 217–262 (CNLGAMRNLYAMHRRLQRHPRSCTRDCAEPRADGREASPQPLEELD) the chain is on the cytoplasmic side. Residues 263-283 (HLLLLALMTVLFTMCSLPVIY) form a helical membrane-spanning segment. At 284–310 (RAYYGAFKDVKEKNRTSEEAEDLRALR) the chain is on the extracellular side. N-linked (GlcNAc...) asparagine glycosylation is present at asparagine 297. The chain crosses the membrane as a helical span at residues 311-331 (FLSVISIVDPWIFIIFRSPVF). At 332–359 (RIFFHKIFIRPLRYRSRCSNSTNMESSL) the chain is on the cytoplasmic side.

Belongs to the G-protein coupled receptor 1 family. Expressed in retinal choroid, ciliary epithelium, longitudinal and circular ciliary muscles, iris, small intestine and platelet membranes.

Its subcellular location is the cell membrane. Functionally, receptor for prostaglandin D2 (PGD2). The activity of this receptor is mainly mediated by G(s) proteins that stimulate adenylate cyclase, resulting in an elevation of intracellular cAMP. A mobilization of calcium is also observed, but without formation of inositol 1,4,5-trisphosphate. Involved in PLA2G3-dependent maturation of mast cells. PLA2G3 is secreted by immature mast cells and acts on nearby fibroblasts upstream to PTDGS to synthesize PGD2, which in turn promotes mast cell maturation and degranulation via PTGDR. The protein is Prostaglandin D2 receptor (PTGDR) of Homo sapiens (Human).